The sequence spans 474 residues: Trehalose-6-phosphate synthase (474 aa).

Arg-10 is a D-glucose 6-phosphate binding site. Position 22-23 (22-23 (GG)) interacts with UDP-alpha-D-glucose. The D-glucose 6-phosphate site is built by Tyr-77 and Asp-131. Arg-263 and Lys-268 together coordinate UDP-alpha-D-glucose. Arg-301 provides a ligand contact to D-glucose 6-phosphate. Residues Phe-340 and 366-370 (LVAKE) each bind UDP-alpha-D-glucose.

Belongs to the glycosyltransferase 20 family. As to quaternary structure, homotetramer.

It carries out the reaction D-glucose 6-phosphate + UDP-alpha-D-glucose = alpha,alpha-trehalose 6-phosphate + UDP + H(+). It functions in the pathway glycan biosynthesis; trehalose biosynthesis. Its function is as follows. Probably involved in the osmoprotection via the biosynthesis of trehalose. Catalyzes the transfer of glucose from UDP-alpha-D-glucose (UDP-Glc) to D-glucose 6-phosphate (Glc-6-P) to form trehalose-6-phosphate. Acts with retention of the anomeric configuration of the UDP-sugar donor. In Cronobacter sakazakii (strain ATCC BAA-894) (Enterobacter sakazakii), this protein is Trehalose-6-phosphate synthase.